We begin with the raw amino-acid sequence, 122 residues long: Large ribosomal subunit protein uL14 (122 aa).

Belongs to the universal ribosomal protein uL14 family. Part of the 50S ribosomal subunit. Forms a cluster with proteins L3 and L19. In the 70S ribosome, L14 and L19 interact and together make contacts with the 16S rRNA in bridges B5 and B8.

In terms of biological role, binds to 23S rRNA. Forms part of two intersubunit bridges in the 70S ribosome. The protein is Large ribosomal subunit protein uL14 of Ruminiclostridium cellulolyticum (strain ATCC 35319 / DSM 5812 / JCM 6584 / H10) (Clostridium cellulolyticum).